The primary structure comprises 321 residues: Basic endochitinase A (321 aa).

The first 19 residues, 1–19 (MGAFALFAVLAMAVTMAVA), serve as a signal peptide directing secretion. The Chitin-binding type-1 domain occupies 20–60 (EQCGSQAGGATCPNCLCCSRFGWCGSTSDYCGDGCQSQCAG). 5 disulfides stabilise this stretch: Cys-22–Cys-37, Cys-31–Cys-43, Cys-34–Cys-61, Cys-36–Cys-50, and Cys-54–Cys-58. The interval 62–79 (GGGGTPVTPTPTPSGGGG) is hinge region (Gly/Pro/Thr-rich). Residues 80-321 (VSSIVSRALF…LDCYNQRPFA (242 aa)) are catalytic. Intrachain disulfides connect Cys-101/Cys-163, Cys-175/Cys-183, and Cys-301/Cys-314. Catalysis depends on Glu-145, which acts as the Proton donor.

It belongs to the glycosyl hydrolase 19 family. Chitinase class I subfamily. Localized in the aleurone cells of the seed endosperm (at protein level).

The catalysed reaction is Random endo-hydrolysis of N-acetyl-beta-D-glucosaminide (1-&gt;4)-beta-linkages in chitin and chitodextrins.. Its function is as follows. Defense against chitin-containing fungal pathogens. Binds the hyphal tips, lateral walls and septa of fungi and degrades mature chitin. This chain is Basic endochitinase A, found in Secale cereale (Rye).